Consider the following 179-residue polypeptide: Laminin-binding fimbrial subunit ElfA (179 aa).

The N-terminal stretch at 1–21 (MKKSVLTAFITVVCATSSVMA) is a signal peptide.

It belongs to the fimbrial protein family.

It localises to the fimbrium. Functionally, part of the elfADCG fimbrial operon, which could be required for adherence to host epithelial cells. ElfA is an accessory colonization factor that contributes to adherence of bacteria to human intestinal epithelial cells and to animal intestinal tissue in vitro. Binds specifically to laminin, but not to fibronectin or collagen type IV. The polypeptide is Laminin-binding fimbrial subunit ElfA (elfA) (Escherichia coli O157:H7).